The sequence spans 62 residues: uncharacterized protein (62 aa).

The signal sequence occupies residues 1-22 (MVNVALLLDQIIATPLRSMVEA).

This is an uncharacterized protein from Archaeoglobus fulgidus (strain ATCC 49558 / DSM 4304 / JCM 9628 / NBRC 100126 / VC-16).